A 338-amino-acid polypeptide reads, in one-letter code: Nucleoid-associated protein HI_0839 (338 aa).

Belongs to the YejK family.

The protein resides in the cytoplasm. Its subcellular location is the nucleoid. This chain is Nucleoid-associated protein HI_0839, found in Haemophilus influenzae (strain ATCC 51907 / DSM 11121 / KW20 / Rd).